A 374-amino-acid chain; its full sequence is Glutamate 5-kinase (374 aa).

Lys17 contacts ATP. Residues Ser57, Asp144, and Asn156 each contribute to the substrate site. Residues 176 to 177 and 218 to 224 each bind ATP; these read SD and TGGMVTK. In terms of domain architecture, PUA spans 280 to 358; that stretch reads QGALVLDDGA…RELARELGPA (79 aa).

It belongs to the glutamate 5-kinase family.

It is found in the cytoplasm. It carries out the reaction L-glutamate + ATP = L-glutamyl 5-phosphate + ADP. It participates in amino-acid biosynthesis; L-proline biosynthesis; L-glutamate 5-semialdehyde from L-glutamate: step 1/2. Its function is as follows. Catalyzes the transfer of a phosphate group to glutamate to form L-glutamate 5-phosphate. In Streptomyces coelicolor (strain ATCC BAA-471 / A3(2) / M145), this protein is Glutamate 5-kinase.